The following is a 555-amino-acid chain: Branched-chain-amino-acid aminotransferase-like protein 1 (555 aa).

This sequence belongs to the class-IV pyridoxal-phosphate-dependent aminotransferase family.

The sequence is that of Branched-chain-amino-acid aminotransferase-like protein 1 from Arabidopsis thaliana (Mouse-ear cress).